We begin with the raw amino-acid sequence, 405 residues long: Cysteine desulfurase IscS (405 aa).

Residues 75-76 (AT), Asn-156, Gln-184, and 204-206 (SAH) contribute to the pyridoxal 5'-phosphate site. An N6-(pyridoxal phosphate)lysine modification is found at Lys-207. Thr-244 contacts pyridoxal 5'-phosphate. Residue Cys-329 is the Cysteine persulfide intermediate of the active site. [2Fe-2S] cluster is bound at residue Cys-329.

The protein belongs to the class-V pyridoxal-phosphate-dependent aminotransferase family. NifS/IscS subfamily. Homodimer. Forms a heterotetramer with IscU, interacts with other sulfur acceptors. It depends on pyridoxal 5'-phosphate as a cofactor.

It localises to the cytoplasm. The enzyme catalyses (sulfur carrier)-H + L-cysteine = (sulfur carrier)-SH + L-alanine. The protein operates within cofactor biosynthesis; iron-sulfur cluster biosynthesis. Master enzyme that delivers sulfur to a number of partners involved in Fe-S cluster assembly, tRNA modification or cofactor biosynthesis. Catalyzes the removal of elemental sulfur atoms from cysteine to produce alanine. Functions as a sulfur delivery protein for Fe-S cluster synthesis onto IscU, an Fe-S scaffold assembly protein, as well as other S acceptor proteins. In Methylobacillus flagellatus (strain ATCC 51484 / DSM 6875 / VKM B-1610 / KT), this protein is Cysteine desulfurase IscS.